Here is a 381-residue protein sequence, read N- to C-terminus: Lipid-A-disaccharide synthase (381 aa).

Belongs to the LpxB family.

The catalysed reaction is a lipid X + a UDP-2-N,3-O-bis[(3R)-3-hydroxyacyl]-alpha-D-glucosamine = a lipid A disaccharide + UDP + H(+). The protein operates within bacterial outer membrane biogenesis; LPS lipid A biosynthesis. Functionally, condensation of UDP-2,3-diacylglucosamine and 2,3-diacylglucosamine-1-phosphate to form lipid A disaccharide, a precursor of lipid A, a phosphorylated glycolipid that anchors the lipopolysaccharide to the outer membrane of the cell. The polypeptide is Lipid-A-disaccharide synthase (Solibacter usitatus (strain Ellin6076)).